Reading from the N-terminus, the 770-residue chain is Probable zinc transporter protein DDB_G0291141 (770 aa).

Over M1 to R36 the chain is Cytoplasmic. A helical membrane pass occupies residues I37–Y57. Residues F58–S62 are Extracellular-facing. The chain crosses the membrane as a helical span at residues I63–V83. The Cytoplasmic segment spans residues E84–K100. The chain crosses the membrane as a helical span at residues I101–S117. At S118–G123 the chain is on the extracellular side. A helical membrane pass occupies residues P124 to L146. Over Q147–D154 the chain is Cytoplasmic. A helical membrane pass occupies residues M155–S175. The Extracellular portion of the chain corresponds to N176–T184. A helical membrane pass occupies residues S185 to W205. Topologically, residues K206–L224 are cytoplasmic. Residues S225–F245 traverse the membrane as a helical segment. The Extracellular segment spans residues S246–Q262. The helical transmembrane segment at L263–V283 threads the bilayer. Topologically, residues S284–N291 are cytoplasmic. The chain crosses the membrane as a helical span at residues V292–I312. Residues G313–D316 are Extracellular-facing. A helical transmembrane segment spans residues F317–Y337. Residues S338 to R404 are Cytoplasmic-facing. Residues I405–W425 traverse the membrane as a helical segment. At T426 to D434 the chain is on the extracellular side. The chain crosses the membrane as a helical span at residues A435–S455. At Q456–R469 the chain is on the cytoplasmic side. A helical membrane pass occupies residues F470–L490. Residues M491–K507 lie on the Extracellular side of the membrane. A helical membrane pass occupies residues L508–G528. Residues D529 to T592 are Cytoplasmic-facing. Residues H532–T566 are disordered. A helical transmembrane segment spans residues L593–A613. Position 614 (D614) is a topological domain, extracellular. Residues P615 to N635 form a helical membrane-spanning segment. Over T636–N770 the chain is Cytoplasmic. Positions D751–N770 are disordered.

The protein belongs to the cation diffusion facilitator (CDF) transporter (TC 2.A.4) family. SLC30A subfamily.

It is found in the membrane. May be involved in zinc transport from the cytoplasm to either intracellular organelles or extracellular spaces. The sequence is that of Probable zinc transporter protein DDB_G0291141 from Dictyostelium discoideum (Social amoeba).